Reading from the N-terminus, the 304-residue chain is D-alanine--D-alanine ligase (304 aa).

Residues 103 to 301 (KQVWLALGLP…FDDLVWRILE (199 aa)) form the ATP-grasp domain. 132-187 (VEMLGFPVIIKPAKEGSSVGVSRVFALEHLEEAVALAARYEGELLMEQLIEGDELT) lines the ATP pocket. The Mg(2+) site is built by D254, E268, and N270.

Belongs to the D-alanine--D-alanine ligase family. The cofactor is Mg(2+). Requires Mn(2+) as cofactor.

It is found in the cytoplasm. The catalysed reaction is 2 D-alanine + ATP = D-alanyl-D-alanine + ADP + phosphate + H(+). It participates in cell wall biogenesis; peptidoglycan biosynthesis. In terms of biological role, cell wall formation. The sequence is that of D-alanine--D-alanine ligase from Xylella fastidiosa (strain Temecula1 / ATCC 700964).